The following is a 110-amino-acid chain: Large ribosomal subunit protein uL22 (110 aa).

The protein belongs to the universal ribosomal protein uL22 family. As to quaternary structure, part of the 50S ribosomal subunit.

Its function is as follows. This protein binds specifically to 23S rRNA; its binding is stimulated by other ribosomal proteins, e.g. L4, L17, and L20. It is important during the early stages of 50S assembly. It makes multiple contacts with different domains of the 23S rRNA in the assembled 50S subunit and ribosome. The globular domain of the protein is located near the polypeptide exit tunnel on the outside of the subunit, while an extended beta-hairpin is found that lines the wall of the exit tunnel in the center of the 70S ribosome. The protein is Large ribosomal subunit protein uL22 of Shewanella denitrificans (strain OS217 / ATCC BAA-1090 / DSM 15013).